Reading from the N-terminus, the 478-residue chain is Protein nucleotidyltransferase YdiU (478 aa).

8 residues coordinate ATP: glycine 84, glycine 86, arginine 87, lysine 107, aspartate 119, glycine 120, arginine 170, and arginine 177. The active-site Proton acceptor is the aspartate 246. Mg(2+) contacts are provided by asparagine 247 and aspartate 256. Aspartate 256 is a binding site for ATP.

This sequence belongs to the SELO family. Mg(2+) serves as cofactor. The cofactor is Mn(2+).

The catalysed reaction is L-seryl-[protein] + ATP = 3-O-(5'-adenylyl)-L-seryl-[protein] + diphosphate. It carries out the reaction L-threonyl-[protein] + ATP = 3-O-(5'-adenylyl)-L-threonyl-[protein] + diphosphate. It catalyses the reaction L-tyrosyl-[protein] + ATP = O-(5'-adenylyl)-L-tyrosyl-[protein] + diphosphate. The enzyme catalyses L-histidyl-[protein] + UTP = N(tele)-(5'-uridylyl)-L-histidyl-[protein] + diphosphate. The catalysed reaction is L-seryl-[protein] + UTP = O-(5'-uridylyl)-L-seryl-[protein] + diphosphate. It carries out the reaction L-tyrosyl-[protein] + UTP = O-(5'-uridylyl)-L-tyrosyl-[protein] + diphosphate. Its function is as follows. Nucleotidyltransferase involved in the post-translational modification of proteins. It can catalyze the addition of adenosine monophosphate (AMP) or uridine monophosphate (UMP) to a protein, resulting in modifications known as AMPylation and UMPylation. This Shigella sonnei (strain Ss046) protein is Protein nucleotidyltransferase YdiU.